The chain runs to 1045 residues: Bifunctional glutamine synthetase adenylyltransferase/adenylyl-removing enzyme (1045 aa).

Residues 1-527 are adenylyl removase; the sequence is MSGPLRSERK…LHSQLFYRPL (527 aa). The adenylyl transferase stretch occupies residues 533–1045; that stretch reads NLSADAIRLS…GVDSMEQREF (513 aa).

The protein belongs to the GlnE family. It depends on Mg(2+) as a cofactor.

The catalysed reaction is [glutamine synthetase]-O(4)-(5'-adenylyl)-L-tyrosine + phosphate = [glutamine synthetase]-L-tyrosine + ADP. It carries out the reaction [glutamine synthetase]-L-tyrosine + ATP = [glutamine synthetase]-O(4)-(5'-adenylyl)-L-tyrosine + diphosphate. Its function is as follows. Involved in the regulation of glutamine synthetase GlnA, a key enzyme in the process to assimilate ammonia. When cellular nitrogen levels are high, the C-terminal adenylyl transferase (AT) inactivates GlnA by covalent transfer of an adenylyl group from ATP to specific tyrosine residue of GlnA, thus reducing its activity. Conversely, when nitrogen levels are low, the N-terminal adenylyl removase (AR) activates GlnA by removing the adenylyl group by phosphorolysis, increasing its activity. The regulatory region of GlnE binds the signal transduction protein PII (GlnB) which indicates the nitrogen status of the cell. This Corynebacterium glutamicum (strain ATCC 13032 / DSM 20300 / JCM 1318 / BCRC 11384 / CCUG 27702 / LMG 3730 / NBRC 12168 / NCIMB 10025 / NRRL B-2784 / 534) protein is Bifunctional glutamine synthetase adenylyltransferase/adenylyl-removing enzyme.